The primary structure comprises 79 residues: D-alanyl carrier protein (79 aa).

One can recognise a Carrier domain in the interval 1 to 77; it reads MDIKSEVLKI…KIIEGITELR (77 aa). Ser35 carries the O-(pantetheine 4'-phosphoryl)serine modification.

Belongs to the DltC family. In terms of processing, 4'-phosphopantetheine is transferred from CoA to a specific serine of apo-DCP.

Its subcellular location is the cytoplasm. It participates in cell wall biogenesis; lipoteichoic acid biosynthesis. Its function is as follows. Carrier protein involved in the D-alanylation of lipoteichoic acid (LTA). The loading of thioester-linked D-alanine onto DltC is catalyzed by D-alanine--D-alanyl carrier protein ligase DltA. The DltC-carried D-alanyl group is further transferred to cell membrane phosphatidylglycerol (PG) by forming an ester bond, probably catalyzed by DltD. D-alanylation of LTA plays an important role in modulating the properties of the cell wall in Gram-positive bacteria, influencing the net charge of the cell wall. The chain is D-alanyl carrier protein from Streptococcus mutans serotype c (strain ATCC 700610 / UA159).